The following is a 305-amino-acid chain: tRNA pseudouridine synthase B (305 aa).

Residue aspartate 38 is the Nucleophile of the active site.

This sequence belongs to the pseudouridine synthase TruB family. Type 1 subfamily.

The enzyme catalyses uridine(55) in tRNA = pseudouridine(55) in tRNA. In terms of biological role, responsible for synthesis of pseudouridine from uracil-55 in the psi GC loop of transfer RNAs. The polypeptide is tRNA pseudouridine synthase B (Latilactobacillus sakei subsp. sakei (strain 23K) (Lactobacillus sakei subsp. sakei)).